Here is a 684-residue protein sequence, read N- to C-terminus: Ubinuclein-1 (684 aa).

5 disordered regions span residues 108–137 (YKGN…FIDD), 157–287 (YVNR…LGKS), 311–332 (NVTG…VKSK), 609–631 (MVDR…CNPT), and 660–684 (PQTR…NLPS). Residues 114–137 (SDGEELDGAPDDDEYDTEDSFIDD) show a composition bias toward acidic residues. Composition is skewed to basic and acidic residues over residues 157–167 (YVNRGKLERME) and 184–199 (SAKP…DKHT). Polar residues predominate over residues 211–235 (STAPGSWKTQESPLPSGAQDANTSV). Basic and acidic residues predominate over residues 238–260 (DDVKHSDRANHQSRNDTSHKSRE). Composition is skewed to polar residues over residues 261–284 (TGSS…TSLL), 311–321 (NVTGSRQSSQA), 611–631 (DRSN…CNPT), and 669–684 (QNLN…NLPS).

The protein belongs to the ubinuclein family. In terms of assembly, component of the HIRA complex made of UBN1, UBN2, ASF1A, CABIN1 and HIRA. Interacts with HIRA.

It is found in the nucleus. The protein localises to the nucleolus. Functionally, may be required for replication-independent chromatin assembly. This chain is Ubinuclein-1, found in Arabidopsis thaliana (Mouse-ear cress).